We begin with the raw amino-acid sequence, 212 residues long: Glutathione S-transferase (212 aa).

The GST N-terminal domain occupies 1–82 (MGMKLHGPAM…YIAHTYADKG (82 aa)). Residues Ser11, 12–13 (PA), 40–41 (HK), 53–54 (QV), and 66–67 (ES) each bind glutathione. The GST C-terminal domain occupies 89 to 212 (DPKKMAIMSV…AWSKAIEYKQ (124 aa)).

The protein belongs to the GST superfamily. Phi family.

It carries out the reaction RX + glutathione = an S-substituted glutathione + a halide anion + H(+). Its function is as follows. Conjugation of reduced glutathione to a wide number of exogenous and endogenous hydrophobic electrophiles. The chain is Glutathione S-transferase from Hyoscyamus muticus (Egyptian henbane).